Here is a 466-residue protein sequence, read N- to C-terminus: Asparagine--tRNA ligase (466 aa).

This sequence belongs to the class-II aminoacyl-tRNA synthetase family. Homodimer.

The protein localises to the cytoplasm. The catalysed reaction is tRNA(Asn) + L-asparagine + ATP = L-asparaginyl-tRNA(Asn) + AMP + diphosphate + H(+). The chain is Asparagine--tRNA ligase from Yersinia pseudotuberculosis serotype O:1b (strain IP 31758).